A 107-amino-acid polypeptide reads, in one-letter code: U1-lycotoxin-Ls1b (107 aa).

The N-terminal stretch at 1–20 (MMKVLVVVALLVTLISYSSS) is a signal peptide. Positions 21–41 (EGIDDLEADELLSLMADEQTR) are excised as a propeptide. Disulfide bonds link Cys44/Cys59, Cys51/Cys68, Cys58/Cys86, and Cys70/Cys84.

The protein belongs to the neurotoxin 19 (CSTX) family. 04 (U1-Lctx) subfamily. Expressed by the venom gland.

The protein resides in the secreted. The chain is U1-lycotoxin-Ls1b from Lycosa singoriensis (Wolf spider).